Reading from the N-terminus, the 1081-residue chain is Cellulose synthase A catalytic subunit 1 [UDP-forming] (1081 aa).

M1 carries the N-acetylmethionine modification. Residues 1–270 (MEASAGLVAG…SRVVPIPSSR (270 aa)) are Cytoplasmic-facing. C39, C42, C58, C61, C66, C69, C81, and C84 together coordinate Zn(2+). The segment at 39 to 85 (CQICGDDVGLAETGDVFVACNECAFPVCRPCYEYERKDGTQCCPQCK) adopts an RING-type; degenerate zinc-finger fold. The tract at residues 118-195 (GANKARHQRH…RQPVPVRIVD (78 aa)) is disordered. The segment covering 127–139 (HGEEFSSSSRHES) has biased composition (basic and acidic residues). Polar residues predominate over residues 158-168 (PDTQSVRTTSG). A helical transmembrane segment spans residues 271–291 (LTPYRVVIILRLIILCFFLQY). The Extracellular portion of the chain corresponds to 292–299 (RTTHPVKN). The chain crosses the membrane as a helical span at residues 300-320 (AYPLWLTSVICEIWFAFSWLL). At 321–856 (DQFPKWYPIN…LLERIAYINT (536 aa)) the chain is on the cytoplasmic side. The UDP-alpha-D-glucose site is built by S359, K365, E366, and D395. Residue D395 is part of the active site. Residues 449-476 (VKERRAMKREYEEFKVRINALVAKAQKI) are a coiled coil. Position 536 (K536) interacts with UDP-alpha-D-glucose. Mn(2+) is bound by residues K537 and D561. Residue D780 is part of the active site. Residues 857 to 877 (IVYPITSIPLIAYCILPAFCL) form a helical membrane-spanning segment. The Extracellular segment spans residues 878 to 889 (ITDRFIIPEISN). The helical transmembrane segment at 890-910 (YASIWFILLFISIAVTGILEL) threads the bilayer. The Cytoplasmic segment spans residues 911 to 925 (RWSGVSIEDWWRNEQ). A helical transmembrane segment spans residues 926–946 (FWVIGGTSAHLFAVFQGLLKV). The Extracellular segment spans residues 947–976 (LAGIDTNFTVTSKATDEDGDFAELYIFKWT). A glycan (N-linked (GlcNAc...) asparagine) is linked at N953. The chain crosses the membrane as a helical span at residues 977–997 (ALLIPPTTVLLVNLIGIVAGV). Residues 998–1008 (SYAVNSGYQSW) are Cytoplasmic-facing. Residues 1009 to 1029 (GPLFGKLFFALWVIAHLYPFL) traverse the membrane as a helical segment. At 1030–1038 (KGLLGRQNR) the chain is on the extracellular side. A helical membrane pass occupies residues 1039-1059 (TPTIVIVWSVLLASIFSLLWV). At 1060–1081 (RINPFVDANPNANNFNGKGGVF) the chain is on the cytoplasmic side.

Belongs to the glycosyltransferase 2 family. Plant cellulose synthase subfamily. As to quaternary structure, interacts with CESA3 and CESA6. Assembly with CESA3 and CESA6 is required for functional complex in primary cell wall cellulose synthesis. Interacts with STL1 and STL2, but not with GOT1. Binds to CSI1. Interacts with PAT24/TIP1. The cofactor is Zn(2+). Mn(2+) is required as a cofactor. S-acylated. As to expression, expressed in germinating seeds, seedlings, roots, stems, shoots leaves and flowers, but not in mature flowers.

It localises to the cell membrane. The enzyme catalyses [(1-&gt;4)-beta-D-glucosyl](n) + UDP-alpha-D-glucose = [(1-&gt;4)-beta-D-glucosyl](n+1) + UDP + H(+). The protein operates within glycan metabolism; plant cellulose biosynthesis. In terms of biological role, catalytic subunit of cellulose synthase terminal complexes ('rosettes'), required for beta-1,4-glucan microfibril crystallization, a major mechanism of the cell wall formation. Involved in the primary cell wall formation. Required during embryogenesis for cell elongation, orientation of cell expansion and complex cell wall formations, such as interdigitated pattern of epidermal pavement cells, stomatal guard cells and trichomes. Plays a role in lateral roots formation, but seems not necessary for the development of tip-growing cells such as root hairs. The presence of each protein CESA1 and CESA6 is critical for cell expansion after germination. This is Cellulose synthase A catalytic subunit 1 [UDP-forming] from Arabidopsis thaliana (Mouse-ear cress).